The chain runs to 129 residues: Putative F-box protein At3g42722 (129 aa).

Positions 4–50 (MASIDCLPDELLVGILSFILTNEAASTSILSKRWRTLFAFSHNLDCN) constitute an F-box domain.

The polypeptide is Putative F-box protein At3g42722 (Arabidopsis thaliana (Mouse-ear cress)).